The chain runs to 84 residues: U8-theraphotoxin-Hhn1a (84 aa).

Positions 1 to 21 (MKVVLLECLVWMMAMMELVSC) are cleaved as a signal peptide. Intrachain disulfides connect Cys-23/Cys-35, Cys-29/Cys-44, Cys-34/Cys-67, Cys-54/Cys-75, and Cys-69/Cys-81.

It belongs to the AVIT (prokineticin) family. As to expression, expressed by the venom gland.

Its subcellular location is the secreted. This chain is U8-theraphotoxin-Hhn1a, found in Cyriopagopus hainanus (Chinese bird spider).